We begin with the raw amino-acid sequence, 126 residues long: Small ribosomal subunit protein uS8 (126 aa).

This sequence belongs to the universal ribosomal protein uS8 family. As to quaternary structure, part of the 30S ribosomal subunit. Contacts proteins S5 and S12.

One of the primary rRNA binding proteins, it binds directly to 16S rRNA central domain where it helps coordinate assembly of the platform of the 30S subunit. The sequence is that of Small ribosomal subunit protein uS8 from Oleidesulfovibrio alaskensis (strain ATCC BAA-1058 / DSM 17464 / G20) (Desulfovibrio alaskensis).